Reading from the N-terminus, the 421-residue chain is Fusaric acid cluster transcription factor FUB10 (421 aa).

The zn(2)-C6 fungal-type DNA-binding region spans Cys16–Cys47. Residues Ser50–Met92 are disordered. A compositionally biased stretch (low complexity) spans Thr74–Ser86.

The protein localises to the nucleus. Its function is as follows. Transcription factor that regulates the expression of the gene cluster that mediates the biosynthesis of fusaric acid, a mycotoxin with low to moderate toxicity to animals and humans, but with high phytotoxic properties. The polypeptide is Fusaric acid cluster transcription factor FUB10 (Gibberella moniliformis (strain M3125 / FGSC 7600) (Maize ear and stalk rot fungus)).